The primary structure comprises 267 residues: Glutamate 5-kinase (267 aa).

Lysine 18 lines the ATP pocket. Residues serine 58, aspartate 145, and asparagine 157 each contribute to the substrate site. ATP-binding positions include 177–178 (SD) and 219–225 (TGGMATK).

Belongs to the glutamate 5-kinase family.

It is found in the cytoplasm. It catalyses the reaction L-glutamate + ATP = L-glutamyl 5-phosphate + ADP. The protein operates within amino-acid biosynthesis; L-proline biosynthesis; L-glutamate 5-semialdehyde from L-glutamate: step 1/2. Its function is as follows. Catalyzes the transfer of a phosphate group to glutamate to form L-glutamate 5-phosphate. This is Glutamate 5-kinase from Clostridium tetani (strain Massachusetts / E88).